Consider the following 514-residue polypeptide: Probable lipid II flippase MurJ (514 aa).

14 helical membrane-spanning segments follow: residues 3-23 (ILKS…FGFF), 25-45 (DVLI…FIAF), 92-112 (ILVL…IIFI), 130-150 (LLKI…CSSI), 157-177 (FFIP…FSFF), 186-206 (IISL…YQFP), 245-265 (ISLI…ISWI), 271-291 (LIEF…FTSF), 315-335 (LILS…LVII), 354-374 (LELY…VSAF), 386-406 (ISIL…FYFQ), 409-429 (GLAL…YWKL), 448-468 (LLIA…FIPS), and 481-501 (LFTI…FLGI).

This sequence belongs to the MurJ/MviN family.

Its subcellular location is the cell inner membrane. It functions in the pathway cell wall biogenesis; peptidoglycan biosynthesis. Its function is as follows. Involved in peptidoglycan biosynthesis. Transports lipid-linked peptidoglycan precursors from the inner to the outer leaflet of the cytoplasmic membrane. In Buchnera aphidicola subsp. Schizaphis graminum (strain Sg), this protein is Probable lipid II flippase MurJ.